The primary structure comprises 228 residues: Lipoprotein-releasing system ATP-binding protein LolD (228 aa).

An ABC transporter domain is found at 6–228; that stretch reads LRCKELSKSY…KNGILHKEQG (223 aa). ATP is bound at residue 42 to 49; sequence GASGSGKS.

It belongs to the ABC transporter superfamily. Lipoprotein translocase (TC 3.A.1.125) family. In terms of assembly, the complex is composed of two ATP-binding proteins (LolD) and two transmembrane proteins (LolC and LolE).

It is found in the cell inner membrane. Functionally, part of the ABC transporter complex LolCDE involved in the translocation of mature outer membrane-directed lipoproteins, from the inner membrane to the periplasmic chaperone, LolA. Responsible for the formation of the LolA-lipoprotein complex in an ATP-dependent manner. The chain is Lipoprotein-releasing system ATP-binding protein LolD from Idiomarina loihiensis (strain ATCC BAA-735 / DSM 15497 / L2-TR).